A 141-amino-acid chain; its full sequence is Large ribosomal subunit protein uL11 (141 aa).

This sequence belongs to the universal ribosomal protein uL11 family. Part of the ribosomal stalk of the 50S ribosomal subunit. Interacts with L10 and the large rRNA to form the base of the stalk. L10 forms an elongated spine to which L12 dimers bind in a sequential fashion forming a multimeric L10(L12)X complex. One or more lysine residues are methylated.

Forms part of the ribosomal stalk which helps the ribosome interact with GTP-bound translation factors. The chain is Large ribosomal subunit protein uL11 from Geobacillus kaustophilus (strain HTA426).